An 85-amino-acid polypeptide reads, in one-letter code: Sodium channel neurotoxin MeuNaTxalpha-2 (85 aa).

Positions 1–19 are cleaved as a signal peptide; the sequence is MNYLVMISLALLLMTGVES. Residues 21 to 83 form the LCN-type CS-alpha/beta domain; it reads RDAYIANDRN…VPIRIPGECR (63 aa). Intrachain disulfides connect Cys-31–Cys-82, Cys-35–Cys-55, Cys-41–Cys-65, and Cys-45–Cys-67. Arg-83 carries the post-translational modification Arginine amide.

This sequence belongs to the long (4 C-C) scorpion toxin superfamily. Sodium channel inhibitor family. Alpha subfamily. In terms of tissue distribution, expressed by the venom gland.

Its subcellular location is the secreted. Alpha toxins bind voltage-independently at site-3 of sodium channels (Nav) and inhibit the inactivation of the activated channels, thereby blocking neuronal transmission. This toxin inhibits inactivation of Nav1.4/SCN4A (EC(50)=2.23 uM) and drosophila DmNav1 (EC(50)=220 nM). The toxin (1 uM) does not significantly shift the midpoint of activation at the two channels, but induces a significant depolarizing shift in the V(1/2) of inactivation of the channels. In addition, the toxin accelerates the recovery from fast inactivation in Nav1.4/SCN4A and DmNav1. It also shows antimicrobial activity. In Mesobuthus eupeus (Lesser Asian scorpion), this protein is Sodium channel neurotoxin MeuNaTxalpha-2.